We begin with the raw amino-acid sequence, 1004 residues long: Ephrin type-A receptor 8 (1004 aa).

An N-terminal signal peptide occupies residues M1–A26. Over G27–T541 the chain is Extracellular. Residues E30–R208 form the Eph LBD domain. Fibronectin type-III domains lie at P327 to A437 and A438 to P533. N-linked (GlcNAc...) asparagine glycosylation is found at N339, N406, and N431. The helical transmembrane segment at I542–C562 threads the bilayer. The interval K563–Y569 is mediates interaction with ANKS1A and ANKS1B. Residues K563–L1004 lie on the Cytoplasmic side of the membrane. A mediates interaction with PIK3CG and required for endocytosis region spans residues A588–G643. Y615 is modified (phosphotyrosine; by autocatalysis). Positions I634–V895 constitute a Protein kinase domain. Residues I640 to V648 and K666 each bind ATP. The Proton acceptor role is filled by D759. Y838 is subject to Phosphotyrosine; by autocatalysis. Residues N929–Q993 form the SAM domain. A PDZ-binding motif is present at residues R1002 to L1004.

The protein belongs to the protein kinase superfamily. Tyr protein kinase family. Ephrin receptor subfamily. Heterotetramer upon binding of the ligand. The heterotetramer is composed of an ephrin dimer and a receptor dimer. Oligomerization is probably required to induce biological responses. May also form heterodimers with other ephrin receptors. Interacts with FYN; possible downstream effector of EPHA8 in regulation of cell adhesion. Interacts with PIK3CG; regulates integrin-mediated cell adhesion to substrate. Interacts with TIAM1; regulates clathrin-mediated endocytosis of EPHA8. Interacts with ANKS1A and ANKS1B; EPHA8 kinase activity-independent but stimulated by EPHA8 ubiquitination. Post-translationally, phosphorylated. Phosphorylation is stimulated upon binding of its ligands including EFNA2, EFNA3 and EFNA5. Autophosphorylation on Tyr-615 is critical for association with FYN. Autophosphorylation on Tyr-838 modulates tyrosine kinase activity. Ubiquitinated. Ubiquitination by CBL regulates the receptor stability and activity through proteasomal degradation. ANKS1A prevents ubiquitination and degradation. As to expression, specifically expressed in the central nervous system.

The protein resides in the cell membrane. It localises to the cell projection. Its subcellular location is the early endosome membrane. It catalyses the reaction L-tyrosyl-[protein] + ATP = O-phospho-L-tyrosyl-[protein] + ADP + H(+). Functionally, receptor tyrosine kinase which binds promiscuously GPI-anchored ephrin-A family ligands residing on adjacent cells, leading to contact-dependent bidirectional signaling into neighboring cells. The signaling pathway downstream of the receptor is referred to as forward signaling while the signaling pathway downstream of the ephrin ligand is referred to as reverse signaling. The GPI-anchored ephrin-A EFNA2, EFNA3, and EFNA5 are able to activate EPHA8 through phosphorylation. With EFNA5 may regulate integrin-mediated cell adhesion and migration on fibronectin substrate but also neurite outgrowth. During development of the nervous system also plays a role in axon guidance. Downstream effectors of the EPHA8 signaling pathway include FYN which promotes cell adhesion upon activation by EPHA8 and the MAP kinases in the stimulation of neurite outgrowth. The protein is Ephrin type-A receptor 8 (Epha8) of Mus musculus (Mouse).